The primary structure comprises 450 residues: 3-phosphoshikimate 1-carboxyvinyltransferase (450 aa).

Residues Lys28, Ser29, and Arg33 each coordinate 3-phosphoshikimate. Residue Lys28 participates in phosphoenolpyruvate binding. Residues Gly100 and Arg128 each contribute to the phosphoenolpyruvate site. 3-phosphoshikimate contacts are provided by Ser173, Gln175, Asp326, and Lys353. Phosphoenolpyruvate is bound at residue Gln175. The Proton acceptor role is filled by Asp326. Residues Arg357 and Arg402 each contribute to the phosphoenolpyruvate site.

The protein belongs to the EPSP synthase family. Monomer.

The protein localises to the cytoplasm. The enzyme catalyses 3-phosphoshikimate + phosphoenolpyruvate = 5-O-(1-carboxyvinyl)-3-phosphoshikimate + phosphate. It participates in metabolic intermediate biosynthesis; chorismate biosynthesis; chorismate from D-erythrose 4-phosphate and phosphoenolpyruvate: step 6/7. In terms of biological role, catalyzes the transfer of the enolpyruvyl moiety of phosphoenolpyruvate (PEP) to the 5-hydroxyl of shikimate-3-phosphate (S3P) to produce enolpyruvyl shikimate-3-phosphate and inorganic phosphate. This Brucella canis (strain ATCC 23365 / NCTC 10854 / RM-666) protein is 3-phosphoshikimate 1-carboxyvinyltransferase.